The following is a 628-amino-acid chain: CMP-5'-(3-aminopropyl)phosphonate synthase (628 aa).

The interval 1-255 is mobA-like NTP transferase; it reads MNENRTFATP…DPGDQRQADF (255 aa). Residues 278 to 628 form a decarboxylase region; that stretch reads GVTDHALLYN…TTEGAGRADG (351 aa). Lysine 466 carries the N6-(pyridoxal phosphate)lysine modification.

In the N-terminal section; belongs to the MobA family. This sequence in the C-terminal section; belongs to the class-I pyridoxal-phosphate-dependent aminotransferase family. Mg(2+) is required as a cofactor. Pyridoxal 5'-phosphate serves as cofactor.

It carries out the reaction 2-amino-4-phosphonobutanoate + CTP = CMP-5'-(3-amino-3-carboxypropyl)phosphonate + diphosphate. The enzyme catalyses CMP-5'-(3-amino-3-carboxypropyl)phosphonate + H(+) = CMP-5'-(3-aminopropyl)phosphonate + CO2. It participates in antibiotic biosynthesis. Bifunctional cytidylyltransferase/decarboxylase involved in the biosynthesis of the phosphonate antibiotic FR-900098, a potent antimalarial agent that acts as an inhibitor of 1-deoxy-D-xylulose 5-phosphate reductoisomerase (DXR), the first enzyme in the nonmevalonate pathway for isoprenoid biosynthesis. Catalyzes the condensation of 2-amino-4-phosphonobutyrate (2APn) and CTP to form CMP-5'-2APn and then decarboxylates CMP-5'-2APn to yield CMP-5'-(3-aminopropyl)phosphonate (CMP-5'-3APn). The chain is CMP-5'-(3-aminopropyl)phosphonate synthase from Streptomyces rubellomurinus (strain ATCC 31215).